The primary structure comprises 117 residues: Large ribosomal subunit protein bL20 (117 aa).

It belongs to the bacterial ribosomal protein bL20 family.

Its function is as follows. Binds directly to 23S ribosomal RNA and is necessary for the in vitro assembly process of the 50S ribosomal subunit. It is not involved in the protein synthesizing functions of that subunit. The protein is Large ribosomal subunit protein bL20 of Glaesserella parasuis serovar 5 (strain SH0165) (Haemophilus parasuis).